Reading from the N-terminus, the 351-residue chain is Serine protease inhibitor dipetalogastin (351 aa).

Residues 1-131 (LIKELVNMVI…AETTNAMEVL (131 aa)) constitute a propeptide that is removed on maturation. Kazal-like domains are found at residues 19 to 69 (KELK…PCDE), 72 to 122 (HDFE…ECHA), 131 to 181 (LFQG…PCDE), 184 to 234 (HDFE…ECHP), 240 to 289 (QLIL…ECKV), and 297 to 347 (GEVR…RCLP). Cystine bridges form between Cys-25/Cys-50, Cys-27/Cys-46, Cys-35/Cys-67, Cys-78/Cys-103, Cys-80/Cys-99, Cys-88/Cys-120, Cys-137/Cys-162, Cys-139/Cys-158, Cys-147/Cys-179, Cys-190/Cys-215, Cys-192/Cys-211, Cys-200/Cys-232, Cys-246/Cys-271, Cys-248/Cys-267, Cys-256/Cys-287, Cys-303/Cys-328, Cys-305/Cys-324, and Cys-313/Cys-345.

The protein localises to the secreted. Thrombin inhibitor. Prevents blood clotting to allow insect to feed on blood. Also functions as an inhibitor of trypsin and plasmin. This chain is Serine protease inhibitor dipetalogastin, found in Dipetalogaster maximus (Blood-sucking bug).